Consider the following 1349-residue polypeptide: MLAVEPTMDGDFPPHELPPPGGGIQLQNRLLHCPWWGSFSPSLYPTFSSENQQFVGSTPFLGGQSCPETSYPTTATVPSFFSKSSDFPQDPSCLEDLSNASVFSSSVDSLSDIPDTPDFLQADSLNEVPTIWDVSTTSTTHDKLFIPSGPFSAPEDPVTSLSSTPLLISYQSHSQPEEEEGEEEEETEELGHAETYADYVPSKSKIGKQHPDRVVETSTLSSVPPPDITYTLALPTSDNSTLSALQLEAITYACQQHEVLLPSGQRAGFLIGDGAGVGKGRTVAGIIVENYLRGRKKALWFSASNDLKYDAERDLRDIEAPGIAVHALSKIKYGDNTTSEGVLFATYSALIGESQAGGQHRTRLRQILQWCGEGFDGVIVFDECHKAKNASSTKMGKAVLDLQSKLPQARVVYASATGASEPRNMIYMSRLGIWGEGTPFRTFEEFLHAIEKRGVGAMEIVAMDMKVSGMYIARQLSFSGVTFRIEEIPLSPAFQQVYNRAARLWAEALSVFQQAADWIGLESRKSLWGQFWSAHQRFFKYLCIAAKVHRLVELAQQELSRDKCVVIGLQSTGEARTREVLDENEGRLDCFVSAAEGVFLSLIQKHFPSTRRRRDRGGGKRKRRPRGRGPKASRLSLEAAGVIRISDGSSTESDAGLDSDFNSSPESLVDDDVVIVDAPTHPTDDRGSLYPLQRDLQGPGVVERVERLKQGLLAKVRALGRELPVNTLDQLIHQLGGPECVAEMTGRKGRVVSRPDGTVVFESRAEQGLSIDHVNLREKQRFMSGEKLVAIISEASSSGVSLQADRRVQNQRRRVHMTLELPWSADRAIQQFGRTHRSNQVSAPEYVFLISELAGERRFASIVAKRLESLGALTHGDRRATESRDLSKYNFENKYGARALSRVLATIMGQTDNRVPLPQGYPGGDTAFFRDMKQGLLSVGIGSRESRSGCLDVEKDCSITKFLNRILGLEVHKQNALFQYFSDTFDHLIEIDKKEGRYDMGILDLAPGINEIHEESQQVFLAPGHPQDGQVVFYKQISVDRGMKWEEALTRSLELKGPYDGFYLSYKVRGSKMSCLLAEQNRGEYFTVYKPNIGRQSQLETLDSLCRKFHRVTVEEAREPWESSYALSLEHCSHTTWNQRCRLTQEGKCCAQGLRLRHHYMLCGALLRVWGRIAAVMADVSSSSYLQIVRLKTKDKKKQVGIKIPEGCVHRVLQELQLMDAEVKRRSTHGLAARPPTPRAITLPCGPGEVLDLTYSPPAEAFPTPPRFAFPSLPPPDPSSLMLGARDPATNPVELAHQSCDINFREVLEDMLRSLRAGPTETPAPLVGVGGGGTERQSVIHFSPPFPNS.

3 disordered regions span residues 170–212 (YQSH…QHPD), 609–633 (STRR…PKAS), and 1319–1349 (PTET…FPNS). Residues 177-188 (EEEEGEEEEETE) show a composition bias toward acidic residues. Over residues 609 to 631 (STRRRRDRGGGKRKRRPRGRGPK) the composition is skewed to basic residues.

Belongs to the SBNO family. As to quaternary structure, interacts with TAL1; this interaction inhibits TAL1 occupancy of the DCSTAMP promoter, leading to the activation of the DCSTAMP promoter by the transcription factor MITF. In terms of tissue distribution, expressed in the spleen and bone marrow, and to a lesser extent in the kidney, liver, brain, skin, heart and muscle. Expressed predominantly in osteoclasts, and to a lesser extent in T-cells, B-cells and osteoblasts. Expressed in macrophages.

Its function is as follows. Acts as a transcriptional coregulator, that can have both coactivator and corepressor functions. Inhibits the DCSTAMP-repressive activity of TAL1, hence enhancing the access of the transcription factor MITF to the DC-STAMP promoter in osteoclast. Plays a role in bone homeostasis; required as a positive regulator in TNFSF11//RANKL-mediated osteoclast fusion via a DCSTAMP-dependent pathway. May also be required in the regulation of osteoblast differentiation. Involved in the transcriptional corepression of NF-kappaB in macrophages. Plays a role as a regulator in the pro-inflammatory cascade. In Mus musculus (Mouse), this protein is Protein strawberry notch homolog 2 (Sbno2).